Consider the following 515-residue polypeptide: MASGILLNVKEEVTCPICLELLTEPLSLPCGHSFCQACITANHKESMLYKEEERSCPVCRISYQPENIQPNRHVANIVEKLREVKLSPEEGQKVDHCARHGEKLLLFCQEDSKVICWLCERSQEHRGHHTFLMEEVAQEYHVKLQTALEMLRQKQQEAEKLEADIREEKASWKIQIDYDKTNVSADFEQLREILDWEESNELQNLEKEEEDILKSLTKSETEMVQQTQYMRELISDLEHRLQGSMMELLQGVDGIIKRVENMTLKKPKTFHKNQRRVFRAPDLKGMLDMFRELTDVRRYWVDVTLAPNNISHAVIAEDKRQVSYQNPQIMYQAPGSSFGSLTNFNYCTGVLGSQSITSRKLTNFNYCTGVLGSQSITSGKHYWEVDVSKKSAWILGVCAGFQPDATYNIEQNENYQPKYGYWVIGLQEGDKYSVFQDSSSHTPFAPFIVPLSVIICPDRVGVFVDYEACTVSFFNITNHGFLIYKFSQCSFSKPVFPYLNPRKCTVPMTLCSPSS.

Alanine 2 carries the N-acetylalanine modification. Residues cysteine 15–arginine 60 form an RING-type zinc finger. Serine 87 bears the Phosphoserine mark. The B box-type zinc finger occupies glutamine 92–methionine 133. Residues cysteine 97, histidine 100, cysteine 119, and histidine 125 each contribute to the Zn(2+) site. Residues alanine 137 to glutamine 225 adopt a coiled-coil conformation. Residues phenylalanine 187–asparagine 200 are required for interaction with GABARAP and for autophagy. Residues leucine 283 to serine 515 form the B30.2/SPRY domain.

The protein belongs to the TRIM/RBCC family. In terms of assembly, can form homodimers and homotrimers. In addition to lower-order dimerization, also exhibits a higher-order multimerization and both low- and high-order multimerizations are essential for its restriction activity. Interacts with BTBD1 and BTBD2. Interacts with PSMC4, PSMC5, PSMD7 and HSPA8/HSC70. Interacts (via B30.2/SPRY domain) with HSPA1A/B. Interacts with PSMC2, MAP3K7/TAK1, TAB2 and TAB3. Interacts with SQSTM1. Interacts with TRIM6 and TRIM34. Interacts with ULK1 (phosphorylated form), GABARAP, GABARAPL1, GABARAPL2, MAP1LC3A, MAP1LC3C and BECN1. In terms of processing, degraded in a proteasome-independent fashion in the absence of viral infection but in a proteasome-dependent fashion following exposure to restriction sensitive virus. Autoubiquitinated in a RING finger- and UBE2D2-dependent manner. Monoubiquitinated by TRIM21. Deubiquitinated by Yersinia YopJ. Ubiquitination may not lead to proteasomal degradation.

The protein localises to the cytoplasm. The protein resides in the nucleus. It catalyses the reaction S-ubiquitinyl-[E2 ubiquitin-conjugating enzyme]-L-cysteine + [acceptor protein]-L-lysine = [E2 ubiquitin-conjugating enzyme]-L-cysteine + N(6)-ubiquitinyl-[acceptor protein]-L-lysine.. Its pathway is protein modification; protein ubiquitination. In terms of biological role, capsid-specific restriction factor that prevents infection from non-host-adapted retroviruses. Blocks viral replication early in the life cycle, after viral entry but before reverse transcription. In addition to acting as a capsid-specific restriction factor, also acts as a pattern recognition receptor that activates innate immune signaling in response to the retroviral capsid lattice. Binding to the viral capsid triggers its E3 ubiquitin ligase activity, and in concert with the heterodimeric ubiquitin conjugating enzyme complex UBE2V1-UBE2N (also known as UBC13-UEV1A complex) generates 'Lys-63'-linked polyubiquitin chains, which in turn are catalysts in the autophosphorylation of the MAP3K7/TAK1 complex (includes TAK1, TAB2, and TAB3). Activation of the MAP3K7/TAK1 complex by autophosphorylation results in the induction and expression of NF-kappa-B and MAPK-responsive inflammatory genes, thereby leading to an innate immune response in the infected cell. Plays a role in regulating autophagy through activation of autophagy regulator BECN1 by causing its dissociation from its inhibitors BCL2 and TAB2. The protein is Tripartite motif-containing protein 5 (TRIM5) of Chlorocebus aethiops (Green monkey).